Here is a 57-residue protein sequence, read N- to C-terminus: UPF0391 membrane protein BRADO5617 (57 aa).

Transmembrane regions (helical) follow at residues 1 to 21 (MLGWVVTFLVIALIAGILGFG) and 30 to 50 (IAKIIFFIAIVLFLVSAVVGL).

It belongs to the UPF0391 family.

The protein localises to the cell membrane. The sequence is that of UPF0391 membrane protein BRADO5617 from Bradyrhizobium sp. (strain ORS 278).